Here is a 157-residue protein sequence, read N- to C-terminus: Endoribonuclease YbeY (157 aa).

The Zn(2+) site is built by histidine 113, histidine 117, and histidine 123.

This sequence belongs to the endoribonuclease YbeY family. Zn(2+) is required as a cofactor.

It is found in the cytoplasm. Its function is as follows. Single strand-specific metallo-endoribonuclease involved in late-stage 70S ribosome quality control and in maturation of the 3' terminus of the 16S rRNA. The polypeptide is Endoribonuclease YbeY (Ehrlichia ruminantium (strain Welgevonden)).